The sequence spans 405 residues: ATP phosphoribosyltransferase regulatory subunit (405 aa).

Belongs to the class-II aminoacyl-tRNA synthetase family. HisZ subfamily. In terms of assembly, heteromultimer composed of HisG and HisZ subunits.

The protein localises to the cytoplasm. The protein operates within amino-acid biosynthesis; L-histidine biosynthesis; L-histidine from 5-phospho-alpha-D-ribose 1-diphosphate: step 1/9. Its function is as follows. Required for the first step of histidine biosynthesis. May allow the feedback regulation of ATP phosphoribosyltransferase activity by histidine. The protein is ATP phosphoribosyltransferase regulatory subunit of Microcystis aeruginosa (strain NIES-843 / IAM M-2473).